Here is a 131-residue protein sequence, read N- to C-terminus: Glycine cleavage system H protein (131 aa).

One can recognise a Lipoyl-binding domain in the interval V24–K106. K65 bears the N6-lipoyllysine mark.

This sequence belongs to the GcvH family. The glycine cleavage system is composed of four proteins: P, T, L and H. Requires (R)-lipoate as cofactor.

The glycine cleavage system catalyzes the degradation of glycine. The H protein shuttles the methylamine group of glycine from the P protein to the T protein. This Sodalis glossinidius (strain morsitans) protein is Glycine cleavage system H protein.